A 715-amino-acid polypeptide reads, in one-letter code: Fatty acid oxidation complex subunit alpha (715 aa).

Residues 1-190 form an enoyl-CoA hydratase/isomerase region; sequence MIYEGKAITV…KVGAVDAVVA (190 aa). Substrate is bound at residue D297. The tract at residues 312 to 715 is 3-hydroxyacyl-CoA dehydrogenase; that stretch reads KDVKQAAVLG…MAKNGQSFFG (404 aa). Residues M325, D344, 401–403, K408, and S430 contribute to the NAD(+) site; that span reads VVE. The active-site For 3-hydroxyacyl-CoA dehydrogenase activity is the H451. Residue N454 coordinates NAD(+). Residues N501 and Y660 each contribute to the substrate site.

The protein in the N-terminal section; belongs to the enoyl-CoA hydratase/isomerase family. This sequence in the C-terminal section; belongs to the 3-hydroxyacyl-CoA dehydrogenase family. In terms of assembly, heterotetramer of two alpha chains (FadB) and two beta chains (FadA).

It catalyses the reaction a (3S)-3-hydroxyacyl-CoA + NAD(+) = a 3-oxoacyl-CoA + NADH + H(+). The catalysed reaction is a (3S)-3-hydroxyacyl-CoA = a (2E)-enoyl-CoA + H2O. It carries out the reaction a 4-saturated-(3S)-3-hydroxyacyl-CoA = a (3E)-enoyl-CoA + H2O. The enzyme catalyses (3S)-3-hydroxybutanoyl-CoA = (3R)-3-hydroxybutanoyl-CoA. It catalyses the reaction a (3Z)-enoyl-CoA = a 4-saturated (2E)-enoyl-CoA. The catalysed reaction is a (3E)-enoyl-CoA = a 4-saturated (2E)-enoyl-CoA. Its pathway is lipid metabolism; fatty acid beta-oxidation. Functionally, involved in the aerobic and anaerobic degradation of long-chain fatty acids via beta-oxidation cycle. Catalyzes the formation of 3-oxoacyl-CoA from enoyl-CoA via L-3-hydroxyacyl-CoA. It can also use D-3-hydroxyacyl-CoA and cis-3-enoyl-CoA as substrate. This Pseudomonas fluorescens (strain Pf0-1) protein is Fatty acid oxidation complex subunit alpha.